The chain runs to 852 residues: Bifunctional uridylyltransferase/uridylyl-removing enzyme (852 aa).

Residues 1–318 form a uridylyltransferase region; it reads MPANLSSALE…STPLRVTLRI (318 aa). The interval 319 to 672 is uridylyl-removing; it reads DDDYIQVNNQ…SRILPKSDSF (354 aa). In terms of domain architecture, HD spans 436 to 558; that stretch reads VDDHILTVVR…VQTHERLSAL (123 aa). 2 consecutive ACT domains span residues 673–757 and 785–852; these read QVMV…SRSR and SVEI…EQLS.

This sequence belongs to the GlnD family. The cofactor is Mg(2+).

The catalysed reaction is [protein-PII]-L-tyrosine + UTP = [protein-PII]-uridylyl-L-tyrosine + diphosphate. The enzyme catalyses [protein-PII]-uridylyl-L-tyrosine + H2O = [protein-PII]-L-tyrosine + UMP + H(+). Its activity is regulated as follows. Uridylyltransferase (UTase) activity is inhibited by glutamine, while glutamine activates uridylyl-removing (UR) activity. Modifies, by uridylylation and deuridylylation, the PII regulatory proteins (GlnB and homologs), in response to the nitrogen status of the cell that GlnD senses through the glutamine level. Under low glutamine levels, catalyzes the conversion of the PII proteins and UTP to PII-UMP and PPi, while under higher glutamine levels, GlnD hydrolyzes PII-UMP to PII and UMP (deuridylylation). Thus, controls uridylylation state and activity of the PII proteins, and plays an important role in the regulation of nitrogen assimilation and metabolism. This chain is Bifunctional uridylyltransferase/uridylyl-removing enzyme, found in Neisseria meningitidis serogroup B (strain ATCC BAA-335 / MC58).